A 353-amino-acid chain; its full sequence is Alanine racemase (353 aa).

Catalysis depends on lysine 33, which acts as the Proton acceptor; specific for D-alanine. Lysine 33 carries the post-translational modification N6-(pyridoxal phosphate)lysine. Position 129 (arginine 129) interacts with substrate. The active-site Proton acceptor; specific for L-alanine is tyrosine 250. Methionine 298 serves as a coordination point for substrate.

The protein belongs to the alanine racemase family. The cofactor is pyridoxal 5'-phosphate.

The catalysed reaction is L-alanine = D-alanine. The protein operates within amino-acid biosynthesis; D-alanine biosynthesis; D-alanine from L-alanine: step 1/1. Functionally, catalyzes the interconversion of L-alanine and D-alanine. May also act on other amino acids. This is Alanine racemase (alr) from Aromatoleum aromaticum (strain DSM 19018 / LMG 30748 / EbN1) (Azoarcus sp. (strain EbN1)).